A 477-amino-acid chain; its full sequence is GTPase Der (477 aa).

EngA-type G domains follow at residues 3–167 and 206–382; these read LTIA…GKER and LRIA…RMWN. Residues 9–16, 56–60, 119–122, 212–219, 259–263, and 324–327 each bind GTP; these read GRPNVGKS, DTAGL, NKSE, GRPNTGKS, and NKWD. Residues 383-467 form the KH-like domain; it reads RRISTAKLNR…PIRISLRASD (85 aa).

It belongs to the TRAFAC class TrmE-Era-EngA-EngB-Septin-like GTPase superfamily. EngA (Der) GTPase family. Associates with the 50S ribosomal subunit.

GTPase that plays an essential role in the late steps of ribosome biogenesis. In Bartonella quintana (strain Toulouse) (Rochalimaea quintana), this protein is GTPase Der.